We begin with the raw amino-acid sequence, 345 residues long: MAEINQTKCDLAFQISYHPIYRLAQFWTLSVSLLAVPSLLYFLLKRVLLLPFHGNLKCLLITYFSSIFLYALVLCFDFSYQCLIPFIVTTKCSLIIDQTLYKCGHMTSLFFLTTPMLLPFGFSIERFVAVGMAYKYEKMRTLLGPILCFILVAPNFVVFYFLFRDEQFTDSFISFLVLPNTPAVQFNNYLWFLLYAKIGNFCCNCVLLIFHKRFKNTYLKKKTSLSVRYALEEISNSSKFTLILTFTHLVFFGAYTIGSILVRTLGESFFGNFLNFYVARGVNCAVPTYNLLIAFVGLISLRQLNSRRHAKILTKVLIRVTGQEGARNYDDIIMQQWNTVSNRTR.

The Extracellular segment spans residues 1 to 22 (MAEINQTKCDLAFQISYHPIYR). N-linked (GlcNAc...) asparagine glycosylation is present at Asn5. Residues 23-43 (LAQFWTLSVSLLAVPSLLYFL) traverse the membrane as a helical segment. The Cytoplasmic portion of the chain corresponds to 44–57 (LKRVLLLPFHGNLK). Residues 58 to 78 (CLLITYFSSIFLYALVLCFDF) form a helical membrane-spanning segment. The Extracellular segment spans residues 79-103 (SYQCLIPFIVTTKCSLIIDQTLYKC). A helical membrane pass occupies residues 104–124 (GHMTSLFFLTTPMLLPFGFSI). Topologically, residues 125–142 (ERFVAVGMAYKYEKMRTL) are cytoplasmic. A helical transmembrane segment spans residues 143-163 (LGPILCFILVAPNFVVFYFLF). Residues 164 to 189 (RDEQFTDSFISFLVLPNTPAVQFNNY) lie on the Extracellular side of the membrane. A helical membrane pass occupies residues 190–210 (LWFLLYAKIGNFCCNCVLLIF). Over 211-241 (HKRFKNTYLKKKTSLSVRYALEEISNSSKFT) the chain is Cytoplasmic. Residues 242-262 (LILTFTHLVFFGAYTIGSILV) traverse the membrane as a helical segment. The Extracellular segment spans residues 263–280 (RTLGESFFGNFLNFYVAR). The helical transmembrane segment at 281–301 (GVNCAVPTYNLLIAFVGLISL) threads the bilayer. Residues 302 to 345 (RQLNSRRHAKILTKVLIRVTGQEGARNYDDIIMQQWNTVSNRTR) are Cytoplasmic-facing.

The protein belongs to the nematode receptor-like protein srb family. Expressed throughout the head.

Its subcellular location is the cell membrane. The protein localises to the perikaryon. It is found in the cell projection. It localises to the dendrite. Functionally, G-protein coupled receptor. Plays a role in the navigational capacity of sperm and promotes the targeting of sperm derived from males to the fertilization site in the uterus of hermaphrodites. The protein is Serpentine receptor class beta-5 of Caenorhabditis elegans.